Here is a 316-residue protein sequence, read N- to C-terminus: Methionyl-tRNA formyltransferase (316 aa).

Residue 113–116 (SLLP) coordinates (6S)-5,6,7,8-tetrahydrofolate.

It belongs to the Fmt family.

It carries out the reaction L-methionyl-tRNA(fMet) + (6R)-10-formyltetrahydrofolate = N-formyl-L-methionyl-tRNA(fMet) + (6S)-5,6,7,8-tetrahydrofolate + H(+). In terms of biological role, attaches a formyl group to the free amino group of methionyl-tRNA(fMet). The formyl group appears to play a dual role in the initiator identity of N-formylmethionyl-tRNA by promoting its recognition by IF2 and preventing the misappropriation of this tRNA by the elongation apparatus. In Sodalis glossinidius (strain morsitans), this protein is Methionyl-tRNA formyltransferase.